A 276-amino-acid polypeptide reads, in one-letter code: NADPH-dependent 7-cyano-7-deazaguanine reductase (276 aa).

Position 83 to 85 (83 to 85 (IES)) interacts with substrate. 85–86 (SK) is a binding site for NADPH. Catalysis depends on Cys-184, which acts as the Thioimide intermediate. The Proton donor role is filled by Asp-191. A substrate-binding site is contributed by 223–224 (HE). 252–253 (RG) is a binding site for NADPH.

It belongs to the GTP cyclohydrolase I family. QueF type 2 subfamily. Homodimer.

It is found in the cytoplasm. It catalyses the reaction 7-aminomethyl-7-carbaguanine + 2 NADP(+) = 7-cyano-7-deazaguanine + 2 NADPH + 3 H(+). It functions in the pathway tRNA modification; tRNA-queuosine biosynthesis. Functionally, catalyzes the NADPH-dependent reduction of 7-cyano-7-deazaguanine (preQ0) to 7-aminomethyl-7-deazaguanine (preQ1). The chain is NADPH-dependent 7-cyano-7-deazaguanine reductase from Pseudomonas fluorescens (strain SBW25).